Consider the following 340-residue polypeptide: Adenine deaminase (340 aa).

Residues histidine 17, histidine 19, and histidine 197 each contribute to the Zn(2+) site. Catalysis depends on glutamate 200, which acts as the Proton donor. Residue aspartate 278 participates in Zn(2+) binding. Aspartate 279 contributes to the substrate binding site.

Belongs to the metallo-dependent hydrolases superfamily. Adenosine and AMP deaminases family. Adenine deaminase type 2 subfamily. Zn(2+) serves as cofactor.

It carries out the reaction adenine + H2O + H(+) = hypoxanthine + NH4(+). Functionally, catalyzes the hydrolytic deamination of adenine to hypoxanthine. Plays an important role in the purine salvage pathway and in nitrogen catabolism. The protein is Adenine deaminase of Streptomyces coelicolor (strain ATCC BAA-471 / A3(2) / M145).